The sequence spans 122 residues: Large ribosomal subunit protein uL14 (122 aa).

It belongs to the universal ribosomal protein uL14 family. In terms of assembly, part of the 50S ribosomal subunit. Forms a cluster with proteins L3 and L19. In the 70S ribosome, L14 and L19 interact and together make contacts with the 16S rRNA in bridges B5 and B8.

Binds to 23S rRNA. Forms part of two intersubunit bridges in the 70S ribosome. This chain is Large ribosomal subunit protein uL14, found in Corynebacterium aurimucosum (strain ATCC 700975 / DSM 44827 / CIP 107346 / CN-1) (Corynebacterium nigricans).